We begin with the raw amino-acid sequence, 293 residues long: Ribosomal protein L11 methyltransferase (293 aa).

Thr-145, Gly-166, Asp-188, and Asn-230 together coordinate S-adenosyl-L-methionine.

It belongs to the methyltransferase superfamily. PrmA family.

It localises to the cytoplasm. The enzyme catalyses L-lysyl-[protein] + 3 S-adenosyl-L-methionine = N(6),N(6),N(6)-trimethyl-L-lysyl-[protein] + 3 S-adenosyl-L-homocysteine + 3 H(+). In terms of biological role, methylates ribosomal protein L11. In Shewanella baltica (strain OS195), this protein is Ribosomal protein L11 methyltransferase.